A 629-amino-acid chain; its full sequence is tRNA uridine 5-carboxymethylaminomethyl modification enzyme MnmG (629 aa).

4–9 is a binding site for FAD; it reads GGGHAG. An NAD(+)-binding site is contributed by 268-282; it reads GPRYCPSIEDKVNRF.

This sequence belongs to the MnmG family. In terms of assembly, homodimer. Heterotetramer of two MnmE and two MnmG subunits. FAD is required as a cofactor.

Its subcellular location is the cytoplasm. Its function is as follows. NAD-binding protein involved in the addition of a carboxymethylaminomethyl (cmnm) group at the wobble position (U34) of certain tRNAs, forming tRNA-cmnm(5)s(2)U34. This Helicobacter hepaticus (strain ATCC 51449 / 3B1) protein is tRNA uridine 5-carboxymethylaminomethyl modification enzyme MnmG.